The primary structure comprises 157 residues: Small ribosomal subunit protein uS7 (157 aa).

This sequence belongs to the universal ribosomal protein uS7 family. As to quaternary structure, part of the 30S ribosomal subunit. Contacts proteins S9 and S11.

Its function is as follows. One of the primary rRNA binding proteins, it binds directly to 16S rRNA where it nucleates assembly of the head domain of the 30S subunit. Is located at the subunit interface close to the decoding center, probably blocks exit of the E-site tRNA. The protein is Small ribosomal subunit protein uS7 of Chlamydia pneumoniae (Chlamydophila pneumoniae).